The primary structure comprises 289 residues: Acetyl-coenzyme A carboxylase carboxyl transferase subunit beta (289 aa).

The CoA carboxyltransferase N-terminal domain maps to 30–289; the sequence is IWRECPRCHS…SNAWRANHDK (260 aa). 4 residues coordinate Zn(2+): C34, C37, C52, and C55. The C4-type zinc-finger motif lies at 34-55; sequence CPRCHSRFYYRRFGNFDVCPEC.

The protein belongs to the AccD/PCCB family. As to quaternary structure, acetyl-CoA carboxylase is a heterohexamer composed of biotin carboxyl carrier protein (AccB), biotin carboxylase (AccC) and two subunits each of ACCase subunit alpha (AccA) and ACCase subunit beta (AccD). The cofactor is Zn(2+).

Its subcellular location is the cytoplasm. The catalysed reaction is N(6)-carboxybiotinyl-L-lysyl-[protein] + acetyl-CoA = N(6)-biotinyl-L-lysyl-[protein] + malonyl-CoA. It functions in the pathway lipid metabolism; malonyl-CoA biosynthesis; malonyl-CoA from acetyl-CoA: step 1/1. In terms of biological role, component of the acetyl coenzyme A carboxylase (ACC) complex. Biotin carboxylase (BC) catalyzes the carboxylation of biotin on its carrier protein (BCCP) and then the CO(2) group is transferred by the transcarboxylase to acetyl-CoA to form malonyl-CoA. The polypeptide is Acetyl-coenzyme A carboxylase carboxyl transferase subunit beta (Oenococcus oeni (strain ATCC BAA-331 / PSU-1)).